We begin with the raw amino-acid sequence, 102 residues long: NADH-quinone oxidoreductase subunit K (102 aa).

Helical transmembrane passes span 6–26, 30–50, and 62–82; these read FEHA…ALLI, LIVM…AFIA, and VMFL…LGLG.

The protein belongs to the complex I subunit 4L family. In terms of assembly, NDH-1 is composed of 14 different subunits. Subunits NuoA, H, J, K, L, M, N constitute the membrane sector of the complex.

Its subcellular location is the cell inner membrane. It catalyses the reaction a quinone + NADH + 5 H(+)(in) = a quinol + NAD(+) + 4 H(+)(out). NDH-1 shuttles electrons from NADH, via FMN and iron-sulfur (Fe-S) centers, to quinones in the respiratory chain. The immediate electron acceptor for the enzyme in this species is believed to be ubiquinone. Couples the redox reaction to proton translocation (for every two electrons transferred, four hydrogen ions are translocated across the cytoplasmic membrane), and thus conserves the redox energy in a proton gradient. This is NADH-quinone oxidoreductase subunit K from Methylococcus capsulatus (strain ATCC 33009 / NCIMB 11132 / Bath).